A 326-amino-acid polypeptide reads, in one-letter code: Ornithine carbamoyltransferase (326 aa).

Carbamoyl phosphate is bound by residues 57–60, Gln84, Arg108, and 135–138; these read STRT and HPTQ. L-ornithine is bound by residues Asn169, Asp233, and 237–238; that span reads SM. 275-276 is a binding site for carbamoyl phosphate; sequence CL.

The protein belongs to the aspartate/ornithine carbamoyltransferase superfamily. OTCase family.

Its subcellular location is the cytoplasm. The catalysed reaction is carbamoyl phosphate + L-ornithine = L-citrulline + phosphate + H(+). The protein operates within amino-acid biosynthesis; L-arginine biosynthesis; L-arginine from L-ornithine and carbamoyl phosphate: step 1/3. Functionally, reversibly catalyzes the transfer of the carbamoyl group from carbamoyl phosphate (CP) to the N(epsilon) atom of ornithine (ORN) to produce L-citrulline. This chain is Ornithine carbamoyltransferase, found in Escherichia coli O6:K15:H31 (strain 536 / UPEC).